Consider the following 337-residue polypeptide: Tryptophan--tRNA ligase (337 aa).

Residues 11–13 (QPT) and 19–20 (GN) contribute to the ATP site. A 'HIGH' region motif is present at residues 12 to 20 (PTGALHLGN). D135 serves as a coordination point for L-tryptophan. Residues 147–149 (GED), V191, and 200–204 (KMSKS) each bind ATP. The 'KMSKS' region signature appears at 200-204 (KMSKS).

It belongs to the class-I aminoacyl-tRNA synthetase family. Homodimer.

Its subcellular location is the cytoplasm. It catalyses the reaction tRNA(Trp) + L-tryptophan + ATP = L-tryptophyl-tRNA(Trp) + AMP + diphosphate + H(+). In terms of biological role, catalyzes the attachment of tryptophan to tRNA(Trp). In Prochlorococcus marinus (strain MIT 9313), this protein is Tryptophan--tRNA ligase.